A 509-amino-acid polypeptide reads, in one-letter code: 2,3-bisphosphoglycerate-independent phosphoglycerate mutase (509 aa).

Mn(2+) is bound by residues aspartate 13 and serine 63. Serine 63 acts as the Phosphoserine intermediate in catalysis. Substrate is bound by residues histidine 124, 154–155 (RD), arginine 186, arginine 192, 261–264 (RPDR), and lysine 335. Residues aspartate 400, histidine 404, aspartate 441, histidine 442, and histidine 459 each coordinate Mn(2+).

Belongs to the BPG-independent phosphoglycerate mutase family. As to quaternary structure, monomer. It depends on Mn(2+) as a cofactor.

The catalysed reaction is (2R)-2-phosphoglycerate = (2R)-3-phosphoglycerate. It participates in carbohydrate degradation; glycolysis; pyruvate from D-glyceraldehyde 3-phosphate: step 3/5. Functionally, catalyzes the interconversion of 2-phosphoglycerate and 3-phosphoglycerate. This is 2,3-bisphosphoglycerate-independent phosphoglycerate mutase from Desulforudis audaxviator (strain MP104C).